A 546-amino-acid polypeptide reads, in one-letter code: Chaperonin GroEL 1 (546 aa).

ATP-binding positions include 30–33 (TLGP), lysine 51, 87–91 (DGTTT), glycine 415, 479–481 (NAA), and aspartate 495.

This sequence belongs to the chaperonin (HSP60) family. As to quaternary structure, forms a cylinder of 14 subunits composed of two heptameric rings stacked back-to-back. Interacts with the co-chaperonin GroES.

It is found in the cytoplasm. The enzyme catalyses ATP + H2O + a folded polypeptide = ADP + phosphate + an unfolded polypeptide.. Functionally, together with its co-chaperonin GroES, plays an essential role in assisting protein folding. The GroEL-GroES system forms a nano-cage that allows encapsulation of the non-native substrate proteins and provides a physical environment optimized to promote and accelerate protein folding. The polypeptide is Chaperonin GroEL 1 (Paraburkholderia xenovorans (strain LB400)).